Here is a 146-residue protein sequence, read N- to C-terminus: 1,4-dihydroxy-2-naphthoyl-CoA hydrolase (146 aa).

Asp15 is an active-site residue.

Belongs to the 4-hydroxybenzoyl-CoA thioesterase family. DHNA-CoA hydrolase subfamily.

The catalysed reaction is 1,4-dihydroxy-2-naphthoyl-CoA + H2O = 1,4-dihydroxy-2-naphthoate + CoA + H(+). The protein operates within cofactor biosynthesis; phylloquinone biosynthesis. It functions in the pathway quinol/quinone metabolism; 1,4-dihydroxy-2-naphthoate biosynthesis; 1,4-dihydroxy-2-naphthoate from chorismate: step 7/7. Catalyzes the hydrolysis of 1,4-dihydroxy-2-naphthoyl-CoA (DHNA-CoA) to 1,4-dihydroxy-2-naphthoate (DHNA), a reaction involved in phylloquinone (vitamin K1) biosynthesis. This is 1,4-dihydroxy-2-naphthoyl-CoA hydrolase from Picosynechococcus sp. (strain ATCC 27264 / PCC 7002 / PR-6) (Agmenellum quadruplicatum).